A 509-amino-acid polypeptide reads, in one-letter code: Bifunctional purine biosynthesis protein PurH (509 aa).

An MGS-like domain is found at 1 to 145 (MIKRALISVF…KSFKDVVVIS (145 aa)).

Belongs to the PurH family.

It carries out the reaction (6R)-10-formyltetrahydrofolate + 5-amino-1-(5-phospho-beta-D-ribosyl)imidazole-4-carboxamide = 5-formamido-1-(5-phospho-D-ribosyl)imidazole-4-carboxamide + (6S)-5,6,7,8-tetrahydrofolate. The enzyme catalyses IMP + H2O = 5-formamido-1-(5-phospho-D-ribosyl)imidazole-4-carboxamide. The protein operates within purine metabolism; IMP biosynthesis via de novo pathway; 5-formamido-1-(5-phospho-D-ribosyl)imidazole-4-carboxamide from 5-amino-1-(5-phospho-D-ribosyl)imidazole-4-carboxamide (10-formyl THF route): step 1/1. It participates in purine metabolism; IMP biosynthesis via de novo pathway; IMP from 5-formamido-1-(5-phospho-D-ribosyl)imidazole-4-carboxamide: step 1/1. The protein is Bifunctional purine biosynthesis protein PurH of Brachyspira hyodysenteriae (strain ATCC 49526 / WA1).